A 127-amino-acid chain; its full sequence is Longitudinals lacking protein-like (127 aa).

Positions 33 to 98 constitute a BTB domain; it reads TDVTLACEGQ…MYAGEVNVSQ (66 aa).

In terms of assembly, the BTB domain interacts with the BTB domain of Trl in vitro. Found in a Pc-containing complex.

The protein localises to the nucleus. Required, together with Trl, for maintaining the repressed state of target genes including homeotic genes Scr and Ubx. May also be involved in the activation of homeotic genes. Binds to a DNA Polycomb response element (PRE) at the bithorax complex. Also binds to polytene chromosomes at several hundred sites, many of which are shared with Trl and ph-p. Required during embryonic development. This is Longitudinals lacking protein-like from Drosophila melanogaster (Fruit fly).